The chain runs to 305 residues: MSIFFSIRFWPAAISAAILWLPQVLGRSNGTAPNYTVEELWKLETTFWDNFLYPANVEQMEAINSTLFTQDVQGRVDITRVFNGSELNTEYIFGLFSDPDHVSLVGVPVDYSITQFIAQGNIASATTVVTFNATSFGNLLVPVTIDTWIMWDADGRIMQYDATFRWFGFLLDTLVEALAESINGTTSQATASLTQLLATTICATHDQYCTGANQQYDNNTACLDFLTSAIPLGKDYELGRNTLLCREVHEHMVQYDPALHCPHIGPTGGDYCVDDQTYAQKVLQKYFNQSWIVGVPSTGDIWLGD.

An N-terminal signal peptide occupies residues 1–26 (MSIFFSIRFWPAAISAAILWLPQVLG). Asn-29, Asn-34, Asn-64, Asn-83, Asn-132, Asn-183, Asn-218, and Asn-288 each carry an N-linked (GlcNAc...) asparagine glycan.

This sequence belongs to the bfoA family.

Its function is as follows. Part of the gene cluster that mediates the biosynthesis of aurasperone B, a dimeric gamma-naphthopyrone. The first step in the biosynthesis of aurasperone B is the production of gamma-naphthopyrone precursor YWA1 by the non-reducing polyketide synthase albA, via condensation of one acetyl-CoA starter unit with 6 malonyl-CoA units. YWA1 is then methylated by aunE at position C-6 to yield foncesin which is further methylated at position C-8 by aunD to produce fonsecin B. A key enzyme in the biosynthetic pathway is the cytochrome P450 monooxygenase aunB which catalyzes the oxidative dimerization of fonsecin B to aurasperone B. AunB also catalyzes the oxidative dimerization of rubrofusarin B into aurasperone A. This Aspergillus niger (strain ATCC 1015 / CBS 113.46 / FGSC A1144 / LSHB Ac4 / NCTC 3858a / NRRL 328 / USDA 3528.7) protein is Aurasperone B biosynthesis cluster protein A.